A 554-amino-acid chain; its full sequence is Neutral amino acid transporter 9 (554 aa).

Residues 1–112 lie on the Cytoplasmic side of the membrane; that stretch reads MDSDQTPLIN…GSDGTGKNSS (112 aa). The chain crosses the membrane as a helical span at residues 113–133; it reads IVTIFMIWNTMMGTSILSIPW. Residues 122–127 form an important for arginine binding and amino acid transport region; sequence TMMGTS. Serine 127 contributes to the arginine binding site. Residues 134 to 139 are Lumenal-facing; it reads GIKQAG. Residues 140–160 form a helical membrane-spanning segment; the sequence is FTTGVCILFLMGILTLYCCYR. At 161 to 191 the chain is on the cytoplasmic side; sequence VVKSRGTIPLTDTSNWEFPDVCQYYFGSFGR. Residues 192-218 form a helical membrane-spanning segment; sequence WSSLLFSLVSLIGAMIVYWVLMSNFLF. Topologically, residues 219–276 are lumenal; sequence NTGKFIYNYVNDVNVTDDVLSNNGSDKVICPNPDSTRPLNKSMDTYFGNGTNYEQFET. 4 N-linked (GlcNAc...) asparagine glycosylation sites follow: asparagine 232, asparagine 241, asparagine 258, and asparagine 267. The cysteines at positions 248 and 417 are disulfide-linked. The chain crosses the membrane as a helical span at residues 277–293; that stretch reads WWSKTNTVPFYLVVLLL. Residues 294–302 are Cytoplasmic-facing; the sequence is PLLSFRSPS. A helical membrane pass occupies residues 303–327; sequence FFAKFNILGTVSIIYLVSLVTLKAA. Over 328 to 349 the chain is Lumenal; the sequence is HLGFHLRFSWNQVQEFFVPEFR. A helical membrane pass occupies residues 350–370; it reads LSFPQLTGILTLAFFIHNCII. Topologically, residues 371–387 are cytoplasmic; sequence TLLKNNRNQKNNVRDLS. A helical transmembrane segment spans residues 388–408; sequence IAYLLVGLTYIYVGVAVFASF. The Lumenal portion of the chain corresponds to 409–430; sequence PSPPLSKQCIQQNFLDNFPSSD. Residues 431-451 form a helical membrane-spanning segment; that stretch reads ILAFVARIFLLFQMMTVYPLL. A CARC motif motif is present at residues 437–447; sequence RIFLLFQMMTV. A CRAC motif motif is present at residues 450–456; the sequence is LLGYLVR. Over 452 to 472 the chain is Cytoplasmic; the sequence is GYLVRVQLLGHIFGDIYPSVF. A helical transmembrane segment spans residues 473–493; that stretch reads HVLALNIAVVGVGVIMARFYP. The Lumenal portion of the chain corresponds to 494–500; that stretch reads NIGGIIR. A helical transmembrane segment spans residues 501 to 521; sequence FSGAACGLAFVFVYPSLIHMI. Over 522 to 533 the chain is Cytoplasmic; that stretch reads SLHRRGQLKVHS. A helical membrane pass occupies residues 534–554; sequence ILIHVSIIVLGIANLIAQFFM.

Belongs to the amino acid/polyamine transporter 2 family. SLC38A9 subfamily. Associated component of the Ragulator complex. Associated component of the Rag GTPases heterodimers. Post-translationally, glycosylated.

The protein localises to the lysosome membrane. Its subcellular location is the late endosome membrane. It catalyses the reaction L-leucine(in) = L-leucine(out). The enzyme catalyses L-tyrosine(in) = L-tyrosine(out). It carries out the reaction L-glutamine(out) = L-glutamine(in). The catalysed reaction is L-asparagine(out) = L-asparagine(in). Lysosomal amino acid transporter involved in the activation of mTORC1 in response to amino acid levels. Probably acts as an amino acid sensor of the Rag GTPases and Ragulator complexes, 2 complexes involved in amino acid sensing and activation of mTORC1, a signaling complex promoting cell growth in response to growth factors, energy levels, and amino acids. Following activation by amino acids, the Ragulator and Rag GTPases function as a scaffold recruiting mTORC1 to lysosomes where it is in turn activated. SLC38A9 mediates transport of amino acids with low capacity and specificity with a slight preference for polar amino acids. Acts as an arginine sensor. Following activation by arginine binding, mediates transport of L-glutamine, leucine and tyrosine with high efficiency, and is required for the efficient utilization of these amino acids after lysosomal protein degradation. However, the transport mechanism is not well defined and the role of sodium is not clear. Guanine exchange factor (GEF) that, upon arginine binding, stimulates GDP release from RRAGA and therefore activates the Rag GTPase heterodimer and the mTORC1 pathway in response to nutrient sufficiency. This Xenopus tropicalis (Western clawed frog) protein is Neutral amino acid transporter 9.